We begin with the raw amino-acid sequence, 362 residues long: S-adenosylmethionine:tRNA ribosyltransferase-isomerase (362 aa).

It belongs to the QueA family. Monomer.

Its subcellular location is the cytoplasm. The catalysed reaction is 7-aminomethyl-7-carbaguanosine(34) in tRNA + S-adenosyl-L-methionine = epoxyqueuosine(34) in tRNA + adenine + L-methionine + 2 H(+). Its pathway is tRNA modification; tRNA-queuosine biosynthesis. In terms of biological role, transfers and isomerizes the ribose moiety from AdoMet to the 7-aminomethyl group of 7-deazaguanine (preQ1-tRNA) to give epoxyqueuosine (oQ-tRNA). This chain is S-adenosylmethionine:tRNA ribosyltransferase-isomerase, found in Deinococcus radiodurans (strain ATCC 13939 / DSM 20539 / JCM 16871 / CCUG 27074 / LMG 4051 / NBRC 15346 / NCIMB 9279 / VKM B-1422 / R1).